Reading from the N-terminus, the 66-residue chain is Neurotoxin Cex11 (66 aa).

Residues 1-64 (KEGYPVNIYT…SYPYPEKSCG (64 aa)) enclose the LCN-type CS-alpha/beta domain. 4 disulfides stabilise this stretch: C12–C63, C16–C39, C25–C44, and C29–C46. At C63 the chain carries Cysteine amide. The propeptide occupies 64 to 66 (GRK).

It belongs to the long (4 C-C) scorpion toxin superfamily. Sodium channel inhibitor family. Beta subfamily. In terms of tissue distribution, expressed by the venom gland.

Its subcellular location is the secreted. Beta toxins bind voltage-independently at site-4 of sodium channels (Nav) and shift the voltage of activation toward more negative potentials thereby affecting sodium channel activation and promoting spontaneous and repetitive firing. The chain is Neurotoxin Cex11 from Centruroides exilicauda (Bark scorpion).